The primary structure comprises 394 residues: Phosphopentomutase (394 aa).

Positions 13, 286, 291, 327, 328, and 339 each coordinate Mn(2+).

The protein belongs to the phosphopentomutase family. Requires Mn(2+) as cofactor.

It is found in the cytoplasm. The enzyme catalyses 2-deoxy-alpha-D-ribose 1-phosphate = 2-deoxy-D-ribose 5-phosphate. It carries out the reaction alpha-D-ribose 1-phosphate = D-ribose 5-phosphate. It functions in the pathway carbohydrate degradation; 2-deoxy-D-ribose 1-phosphate degradation; D-glyceraldehyde 3-phosphate and acetaldehyde from 2-deoxy-alpha-D-ribose 1-phosphate: step 1/2. In terms of biological role, isomerase that catalyzes the conversion of deoxy-ribose 1-phosphate (dRib-1-P) and ribose 1-phosphate (Rib-1-P) to deoxy-ribose 5-phosphate (dRib-5-P) and ribose 5-phosphate (Rib-5-P), respectively. This is Phosphopentomutase from Bacillus cereus (strain B4264).